The following is a 158-amino-acid chain: 2-C-methyl-D-erythritol 2,4-cyclodiphosphate synthase (158 aa).

The a divalent metal cation site is built by Asp9 and His11. 4-CDP-2-C-methyl-D-erythritol 2-phosphate contacts are provided by residues 9 to 11 (DVH) and 35 to 36 (HS). Residue His43 coordinates a divalent metal cation. 4-CDP-2-C-methyl-D-erythritol 2-phosphate-binding positions include 57 to 59 (DIG), 62 to 66 (FPDTD), 101 to 107 (AQAPKMA), 133 to 136 (TTTE), Phe140, and Arg143.

This sequence belongs to the IspF family. In terms of assembly, homotrimer. It depends on a divalent metal cation as a cofactor.

The catalysed reaction is 4-CDP-2-C-methyl-D-erythritol 2-phosphate = 2-C-methyl-D-erythritol 2,4-cyclic diphosphate + CMP. It participates in isoprenoid biosynthesis; isopentenyl diphosphate biosynthesis via DXP pathway; isopentenyl diphosphate from 1-deoxy-D-xylulose 5-phosphate: step 4/6. Functionally, involved in the biosynthesis of isopentenyl diphosphate (IPP) and dimethylallyl diphosphate (DMAPP), two major building blocks of isoprenoid compounds. Catalyzes the conversion of 4-diphosphocytidyl-2-C-methyl-D-erythritol 2-phosphate (CDP-ME2P) to 2-C-methyl-D-erythritol 2,4-cyclodiphosphate (ME-CPP) with a corresponding release of cytidine 5-monophosphate (CMP). This chain is 2-C-methyl-D-erythritol 2,4-cyclodiphosphate synthase, found in Vibrio campbellii (strain ATCC BAA-1116).